The primary structure comprises 375 residues: MENFPTEYFLNTSVRLLEYIRYRDSNYTREERIENLHYAYNKAAHHFAQPRQQKMLKVDPKRLQASLQTIVGMVVYSWAKVSKECMADLSIHYTYTLVLDDSSDDPHPAMVNYFDDLQAGREQAHPWWALVNEHFPNVLRHFGPFCSLNLIRSTMDFFEGCWIEQYNFGGFPGSDDYPQFLRRMNGLGHCVGASLWPKDLFDERKNFLEITTAVAQMENWMVWVNDLMSFYKEFDDERDQISLVKNFVTCHEITLDEALEKLTQETLHSSKQMVAVFADKDPQVMDTIECFMHGYVTWHLCDARYRLHEIYEKVKDQDTEDAKKFCKFFEQAANVGAVAASEWAYPPVAQLANVRAKSDVKEAQKPFLSSIELVE.

This sequence belongs to the trichodiene synthase family.

It catalyses the reaction (2E,6E)-farnesyl diphosphate = trichodiene + diphosphate. The protein operates within sesquiterpene biosynthesis; trichothecene biosynthesis. Functionally, TS is a member of the terpene cyclase group of enzymes. It catalyzes the isomerization and cyclization of farnesyl pyro-phosphate to form trichodiene, the first cyclic intermediate in the biosynthetic pathway for trichothecenes. It serves to branch trichothecene biosynthesis from the isoprenoid pathway. This is Trichodiene synthase (TRI5) from Fusarium cerealis (Fusarium crookwellense).